Consider the following 73-residue polypeptide: RNA-binding protein Hfq (73 aa).

The Sm domain occupies 8-68 (DQFLNQIRKD…ISTFAPQKNV (61 aa)).

Belongs to the Hfq family. As to quaternary structure, homohexamer.

Its function is as follows. RNA chaperone that binds small regulatory RNA (sRNAs) and mRNAs to facilitate mRNA translational regulation in response to envelope stress, environmental stress and changes in metabolite concentrations. Also binds with high specificity to tRNAs. This is RNA-binding protein Hfq from Bacillus velezensis (strain DSM 23117 / BGSC 10A6 / LMG 26770 / FZB42) (Bacillus amyloliquefaciens subsp. plantarum).